A 274-amino-acid chain; its full sequence is NH(3)-dependent NAD(+) synthetase (274 aa).

ATP is bound at residue 46–53 (GISGGQDS). D52 serves as a coordination point for Mg(2+). R140 contacts deamido-NAD(+). T160 is an ATP binding site. E165 is a Mg(2+) binding site. Residues K173 and D180 each contribute to the deamido-NAD(+) site. Positions 189 and 211 each coordinate ATP. Residue 260–261 (HK) coordinates deamido-NAD(+).

It belongs to the NAD synthetase family. Homodimer.

The enzyme catalyses deamido-NAD(+) + NH4(+) + ATP = AMP + diphosphate + NAD(+) + H(+). The protein operates within cofactor biosynthesis; NAD(+) biosynthesis; NAD(+) from deamido-NAD(+) (ammonia route): step 1/1. Catalyzes the ATP-dependent amidation of deamido-NAD to form NAD. Uses ammonia as a nitrogen source. This is NH(3)-dependent NAD(+) synthetase from Streptococcus pyogenes serotype M18 (strain MGAS8232).